The following is a 73-amino-acid chain: Ocellatin-PT7 (73 aa).

Positions 1–22 (MAFLKKSLFLVLFLGLVSLSIC) are cleaved as a signal peptide. Residues 23 to 39 (DEEKRQDEDDDDDDDEE) constitute a propeptide that is removed on maturation.

In terms of tissue distribution, expressed by the skin glands.

It localises to the secreted. Its function is as follows. Has antibacterial activity against Gram-negative bacteria E.coli ATCC 25922 (MIC=60 uM) and S.choleraesuis ATCC 14028 (MIC=240 uM) and against Gram-positive bacterium S.aureus ATCC 29313 (MIC=240 uM). Shows no hemolytic activity and no cytotoxicity. This chain is Ocellatin-PT7, found in Leptodactylus pustulatus (Ceara white-lipped frog).